The following is a 385-amino-acid chain: Glucans biosynthesis protein C (385 aa).

10 helical membrane passes run 17–37 (AWLM…SHTW), 60–80 (MQVF…RYPL), 91–111 (VGIP…IMLQ), 137–157 (ISHL…VWIF), 173–193 (KFSM…YAVI), 212–232 (FIVM…LAFI), 239–259 (LFTT…VAYL), 274–294 (TESV…FSFG), 311–331 (ASLF…AYIT), and 338–358 (WLGF…LYEI).

The protein belongs to the acyltransferase 3 family. OpgC subfamily.

The protein resides in the cell membrane. It participates in glycan metabolism; osmoregulated periplasmic glucan (OPG) biosynthesis. Its function is as follows. Necessary for the succinyl substitution of periplasmic glucans. Could catalyze the transfer of succinyl residues from the cytoplasmic side of the membrane to the nascent glucan backbones on the periplasmic side of the membrane. In Shigella sonnei (strain Ss046), this protein is Glucans biosynthesis protein C.